The following is a 337-amino-acid chain: Putative 4-hydroxythreonine-4-phosphate dehydrogenase 2 (337 aa).

3 residues coordinate a divalent metal cation: histidine 173, histidine 217, and histidine 274.

Belongs to the PdxA family. In terms of assembly, homodimer. It depends on Zn(2+) as a cofactor. The cofactor is Mg(2+). Co(2+) serves as cofactor.

The protein resides in the cytoplasm. The catalysed reaction is 4-(phosphooxy)-L-threonine + NAD(+) = 3-amino-2-oxopropyl phosphate + CO2 + NADH. It participates in cofactor biosynthesis; pyridoxine 5'-phosphate biosynthesis; pyridoxine 5'-phosphate from D-erythrose 4-phosphate: step 4/5. Catalyzes the NAD(P)-dependent oxidation of 4-(phosphooxy)-L-threonine (HTP) into 2-amino-3-oxo-4-(phosphooxy)butyric acid which spontaneously decarboxylates to form 3-amino-2-oxopropyl phosphate (AHAP). The chain is Putative 4-hydroxythreonine-4-phosphate dehydrogenase 2 from Pseudomonas aeruginosa (strain ATCC 15692 / DSM 22644 / CIP 104116 / JCM 14847 / LMG 12228 / 1C / PRS 101 / PAO1).